A 467-amino-acid chain; its full sequence is 2-succinylbenzoate--CoA ligase (467 aa).

The protein belongs to the ATP-dependent AMP-binding enzyme family. MenE subfamily.

The enzyme catalyses 2-succinylbenzoate + ATP + CoA = 2-succinylbenzoyl-CoA + AMP + diphosphate. It functions in the pathway quinol/quinone metabolism; 1,4-dihydroxy-2-naphthoate biosynthesis; 1,4-dihydroxy-2-naphthoate from chorismate: step 5/7. It participates in quinol/quinone metabolism; menaquinone biosynthesis. Its function is as follows. Converts 2-succinylbenzoate (OSB) to 2-succinylbenzoyl-CoA (OSB-CoA). In Listeria monocytogenes serotype 4b (strain F2365), this protein is 2-succinylbenzoate--CoA ligase.